We begin with the raw amino-acid sequence, 268 residues long: MEIDSKITNFEDAGTINLNLHNFVSEKFANKPKVLNVASLASNSVDEAGDSEQKVSFRINQTGNIFYSTTTPELTLESKKLFNSVTVLFAAMTKALGEKGLNLFNYEAVASLIQKSGYFVEVQKFQKNLSIKSGSLSIDTQIIQQLIPGLTSGASLDIAKGVLGALNGEFSASSSDEKVKIAHLLFICEELFGAPSVTVRLFYATKETHKTLTSSPCHKSSSVSFELNQEASTFLFVSPDTIAEFSQKFETQPEEYKNLIEKLKGYLP.

Its function is as follows. Plays an essential role in zygote formation by inducing sexual cell fusion. Overexpressing cells eventually formed many loose mounds, in which giant multinucleate cells were surrounded by normal-sized cells. The chain is Zygote formation protein zyg1 (zyg1) from Dictyostelium mucoroides (Slime mold).